Consider the following 813-residue polypeptide: Probable receptor-like protein kinase At5g39020 (813 aa).

The first 21 residues, 1–21 (MNCNVLFLLSVLVSVTAGVTA), serve as a signal peptide directing secretion. The Extracellular portion of the chain corresponds to 22–437 (AYHPTDVFLF…TPPIKGKPHV (416 aa)). 10 N-linked (GlcNAc...) asparagine glycosylation sites follow: Asn46, Asn61, Asn165, Asn202, Asn213, Asn263, Asn286, Asn293, Asn384, and Asn401. A helical membrane pass occupies residues 438–458 (LVIILIVVGSVIGLATFIVII). Over 459–813 (MLLIRQMKRK…QTQTLDSTII (355 aa)) the chain is Cytoplasmic. In terms of domain architecture, Protein kinase spans 496–771 (KSFSHTVGKG…KVVEMIEGSL (276 aa)). Residues 502–510 (VGKGGFGTV) and Lys524 contribute to the ATP site. Catalysis depends on Asp619, which acts as the Proton acceptor. Residues 791–813 (ESSSLSDGQEAEKQTQTLDSTII) form a disordered region. Over residues 804–813 (QTQTLDSTII) the composition is skewed to polar residues.

Belongs to the protein kinase superfamily. Ser/Thr protein kinase family.

The protein localises to the membrane. The protein is Probable receptor-like protein kinase At5g39020 of Arabidopsis thaliana (Mouse-ear cress).